A 117-amino-acid polypeptide reads, in one-letter code: MASQTQGIQQLLAAEKKAAEKVAEARKRKARRLKQAKDEATEEIEKFRQERERAFKEFEAKHMGSREGVAAKIDADIRVKLADMDRAIQTRKDPFILEILQYVYNISPEVHKNYNHK.

The protein belongs to the V-ATPase G subunit family. As to quaternary structure, V-ATPase is a heteromultimeric enzyme made up of two complexes: the ATP-hydrolytic V1 complex and the proton translocation V0 complex. The V1 complex consists of three catalytic AB heterodimers that form a heterohexamer, three peripheral stalks each consisting of EG heterodimers, one central rotor including subunits D and F, and the regulatory subunits C and H. The proton translocation complex V0 consists of the proton transport subunit a, a ring of proteolipid subunits c9c'', rotary subunit d, subunits e and f, and the accessory subunits VhaAC45 and ATP6AP2.

In terms of biological role, subunit of the V1 complex of vacuolar(H+)-ATPase (V-ATPase), a multisubunit enzyme composed of a peripheral complex (V1) that hydrolyzes ATP and a membrane integral complex (V0) that translocates protons. V-ATPase is responsible for acidifying and maintaining the pH of intracellular compartments and in some cell types, is targeted to the plasma membrane, where it is responsible for acidifying the extracellular environment. In enterocytes, acts as part of a pHCl-2 sensory pathway which mediates Tor-dependent larval growth and metabolism in response to zinc availability. Likely acts in maintaining enterocyte lysosomal acidification which consequently promotes Tor activation at the lysosome membrane. In Drosophila melanogaster (Fruit fly), this protein is V-type proton ATPase subunit G (Vha13).